The following is a 57-amino-acid chain: LVLFLGLVSLSICEEEKRETEEEENDQEEDDKSEEKRFLSLLPSIVSGAVSLAKKLG.

The signal sequence occupies residues 1-13 (LVLFLGLVSLSIC). Residues 14-35 (EEEKRETEEEENDQEEDDKSEE) constitute a propeptide that is removed on maturation. Residues 16 to 35 (EKRETEEEENDQEEDDKSEE) form a disordered region. Residues 21 to 32 (EEEENDQEEDDK) show a composition bias toward acidic residues. L56 carries the leucine amide modification.

Expressed by the skin glands.

Its subcellular location is the secreted. Functionally, has antibacterial activity against the Gram-positive bacterium M.luteus ATCC 49732 (MIC=1.3 uM). Does not inhibit the growth of the fungus C.albicans. The chain is Phylloseptin-Az4 (psn12) from Pithecopus azureus (Orange-legged monkey tree frog).